We begin with the raw amino-acid sequence, 686 residues long: MAPPCSISSASHLLITASLPKPSLRPPRLPHPKPLPAALLALAAAAPTLPALADVPAPPPSPTQDVQVLEAPSPAANPFSNALLTAPKPTSSAAADLPEGAQWRYSEFLSAVKKGKVERVRFSKDGGLLQLTAIDGRRATVVVPNDPDLIDILATNGVDISVAEGDAAGPGGFLAFVGNLLFPFLAFAGLFFLFRRAQGGPGAGPGGLGGPMDFGRSKSKFQEVPETGVTFVDVAGADQAKLELQEVVDFLKNPDKYTALGAKIPKGCLLVGPPGTGKTLLARAVAGEAGVPFFSCAASEFVELFVGVGASRVRDLFEKAKAKAPCIVFIDEIDAVGRQRGAGLGGGNDEREQTINQLLTEMDGFAGNSGVIVLAATNRPDVLDAALLRPGRFDRQVTVDRPDVAGRVKILEVHSRGKALAKDVDFEKIARRTPGFTGADLQNLMNEAAILAARRDLKEISKDEISDALERIIAGPEKKNAVVSEEKRRLVAYHEAGHALVGALMPEYDPVAKISIIPRGQAGGLTFFAPSEERLESGLYSRSYLENQMAVALGGRVAEEVIFGQENVTTGASNDFMQVSRVARQMVERFGFSKKIGQVAIGGPGGNPFLGQQMSSQKDYSMATADVVDAEVRELVEKAYSRATQIITTHIDILHKLAQLLMEKETVDGEEFMSLFIDGQAELFVA.

The transit peptide at 1–16 (MAPPCSISSASHLLIT) directs the protein to the chloroplast. The chain crosses the membrane as a helical span at residues 173-193 (FLAFVGNLLFPFLAFAGLFFL). 272-279 (GPPGTGKT) provides a ligand contact to ATP. His-494 serves as a coordination point for Zn(2+). Residue Glu-495 is part of the active site. Zn(2+) contacts are provided by His-498 and Asp-575.

This sequence in the N-terminal section; belongs to the AAA ATPase family. It in the C-terminal section; belongs to the peptidase M41 family. Zn(2+) serves as cofactor.

Its subcellular location is the plastid. It is found in the chloroplast thylakoid membrane. In terms of biological role, probable ATP-dependent zinc metallopeptidase. The chain is ATP-dependent zinc metalloprotease FTSH 1, chloroplastic (FTSH1) from Oryza sativa subsp. japonica (Rice).